The primary structure comprises 1012 residues: MYNSAKQLQRVLTAREIRKTFLDHFTVNHGHKFVRSSPVVPFCDPTVAFVNAGMNQFKSVFLGTAAAPHKRVVNSQKCVRVGGKHNDLSVVGTDGYHHTFFEMLGNWSFGDYFKREACAMALELLRGPYNIDPGRLYVTYFAGDKVLGIPADLECFEIWRSLGFPASRILPFGCADNFWEMGATGPCGPCTEIHIDHRPDLGSVEQRAKLVNAGRSDLTELWNLVFIQYNRHADGSISQLPAHHVDTGMGFERLTAVLQNKSSNYDTDLFTPIFDGIQQAAKTPVYSGSFPDGGNAAVLDTSYRILADHARMVTACLADGMLPDQNQKLRRVLRKALNISEHVFAHDKLLTQLVPIVVETLGEAYPEMAAKQQAVIDLICHEQEVYKNLRESSSKAFAEVLMEFPNLDDIDLMECPGFVPAYRELQMQRCKFSNNTIPGDFLYKLTDTYGLTEESFLKLAELENMNCDLERYRAEVSLAKLKAKGNQRETAGGSLCDLATEQRIAEAQAMLTKRLTPTDNSHKYTYSFDKESDSYQIPPLKTRVLGMLLNDAEVSRTQGSRIQQPFTDLISIVTAGSNFYYESGGQQSDGGKILVSNHQQPDHPHSLDVIGVKHLNDCVVHICKLSSPTDAFQLAIGDEVELQVDAQQRQLNTCHHTATHLLNAAIRSLFKKVTYQVSSSVSSDQCKLELGLLGKRIQKTDVQLIEDLINRVICSAAPVEVQLLSAAEVLEQNDITMVPGEVYPEQGLRLVNVESPELQLSSKELCCGTHATNTSELSCFCIVNLKQTNRARFAFTAVAGQAAENVLKTAALLRHRVDLLEKQFQTDKLTNATEAELQTIRHNMLHTDIKLPYAFKMDTLERITEMLKRIKDSSRTTLKEFVDVEMRTLLQEKPLDTHPFILHYITSSALVEEIPLQRATKLCPDRPILVISVCDSVVKARCCVPEKCITEKFNASAWLQSFADTFNGQIAAPKGQNPQAVCNMKGRRVSNLFEEQLEQAMSKAHAYAKLYL.

Residues 1-24 constitute a mitochondrion transit peptide; that stretch reads MYNSAKQLQRVLTAREIRKTFLDH. Zn(2+) contacts are provided by His-656, His-660, Cys-766, and His-770.

This sequence belongs to the class-II aminoacyl-tRNA synthetase family. Monomer. Requires Zn(2+) as cofactor.

It localises to the mitochondrion. It carries out the reaction tRNA(Ala) + L-alanine + ATP = L-alanyl-tRNA(Ala) + AMP + diphosphate. Functionally, catalyzes the attachment of alanine to tRNA(Ala) in a two-step reaction: alanine is first activated by ATP to form Ala-AMP and then transferred to the acceptor end of tRNA(Ala). Also edits incorrectly charged tRNA(Ala) via its editing domain. This chain is Alanine--tRNA ligase, mitochondrial, found in Drosophila melanogaster (Fruit fly).